We begin with the raw amino-acid sequence, 34 residues long: MSDIN-like toxin proprotein 2 (34 aa).

The propeptide occupies 1–10 (MSDINTARLP). A cross-link (cyclopeptide (Phe-Pro)) is located at residues 11 to 20 (FYQFPDFKYP). A propeptide spanning residues 21–34 (CVGDDIEMVLARGE) is cleaved from the precursor.

The protein belongs to the MSDIN fungal toxin family. Processed by the macrocyclase-peptidase enzyme POPB to yield a toxic cyclic decapeptide. POPB first removes 10 residues from the N-terminus. Conformational trapping of the remaining peptide forces the enzyme to release this intermediate rather than proceed to macrocyclization. The enzyme rebinds the remaining peptide in a different conformation and catalyzes macrocyclization of the N-terminal 10 residues.

Functionally, probable toxin that belongs to the MSDIN-like toxin family responsible for a large number of food poisoning cases and deaths. This chain is MSDIN-like toxin proprotein 2, found in Amanita bisporigera (Destroying angel).